Reading from the N-terminus, the 372-residue chain is Cytochrome b (372 aa).

Helical transmembrane passes span 25–45 (FGSM…FLSM), 69–90 (WMMQ…YIHV), 105–125 (WLSG…GYVL), and 170–190 (FFAL…LHIM). Heme b contacts are provided by histidine 75 and histidine 89. Histidine 174 and histidine 188 together coordinate heme b. Residue histidine 193 participates in a ubiquinone binding. 4 consecutive transmembrane segments (helical) span residues 218–238 (YKDL…ISFI), 280–300 (LGGA…PFTH), 312–332 (FMQL…WTAT), and 339–358 (YTMI…MSNP).

The protein belongs to the cytochrome b family. As to quaternary structure, the cytochrome bc1 complex contains 3 respiratory subunits (MT-CYB, CYC1 and UQCRFS1), 2 core proteins (UQCRC1 and UQCRC2) and probably 6 low-molecular weight proteins. Requires heme b as cofactor.

It localises to the mitochondrion inner membrane. Functionally, component of the ubiquinol-cytochrome c reductase complex (complex III or cytochrome b-c1 complex) that is part of the mitochondrial respiratory chain. The b-c1 complex mediates electron transfer from ubiquinol to cytochrome c. Contributes to the generation of a proton gradient across the mitochondrial membrane that is then used for ATP synthesis. The sequence is that of Cytochrome b (MT-CYB) from Acrantophis dumerili (Dumeril's ground boa).